The sequence spans 508 residues: Mu-like prophage FluMu protein gp28 (508 aa).

It to phage Mu protein gp28.

In Haemophilus influenzae (strain ATCC 51907 / DSM 11121 / KW20 / Rd), this protein is Mu-like prophage FluMu protein gp28.